Consider the following 367-residue polypeptide: Probable protein phosphatase 2C 67 (367 aa).

The disordered stretch occupies residues 1 to 79; that stretch reads MAHQKREATS…DEKAATNSNV (79 aa). Over residues 31–46 the composition is skewed to basic and acidic residues; sequence AEKEHILTSDASHETN. The region spanning 91–365 is the PPM-type phosphatase domain; it reads EADAAEDKGC…DNCTAVLIVF (275 aa). Mn(2+)-binding residues include Asp131, Gly132, Asp312, and Asp356.

The protein belongs to the PP2C family. Mg(2+) serves as cofactor. It depends on Mn(2+) as a cofactor.

The catalysed reaction is O-phospho-L-seryl-[protein] + H2O = L-seryl-[protein] + phosphate. It carries out the reaction O-phospho-L-threonyl-[protein] + H2O = L-threonyl-[protein] + phosphate. The polypeptide is Probable protein phosphatase 2C 67 (Oryza sativa subsp. japonica (Rice)).